The primary structure comprises 419 residues: UPF0761 membrane protein ACIAD3168 (419 aa).

Transmembrane regions (helical) follow at residues 42-62, 105-125, 148-168, 186-206, 212-232, and 252-272; these read ALTY…LVII, LTVI…STIE, WTII…SSTV, AFIL…ILYW, TVPM…FELL, and AFAA…IVLL.

It belongs to the UPF0761 family.

It is found in the cell inner membrane. This chain is UPF0761 membrane protein ACIAD3168, found in Acinetobacter baylyi (strain ATCC 33305 / BD413 / ADP1).